Reading from the N-terminus, the 176-residue chain is ATP-dependent protease subunit HslV (176 aa).

The active site involves T5. A161, C164, and T167 together coordinate Na(+).

The protein belongs to the peptidase T1B family. HslV subfamily. A double ring-shaped homohexamer of HslV is capped on each side by a ring-shaped HslU homohexamer. The assembly of the HslU/HslV complex is dependent on binding of ATP.

It is found in the cytoplasm. The catalysed reaction is ATP-dependent cleavage of peptide bonds with broad specificity.. Allosterically activated by HslU binding. Its function is as follows. Protease subunit of a proteasome-like degradation complex believed to be a general protein degrading machinery. In Caldicellulosiruptor saccharolyticus (strain ATCC 43494 / DSM 8903 / Tp8T 6331), this protein is ATP-dependent protease subunit HslV.